A 341-amino-acid chain; its full sequence is L-threonine 3-dehydrogenase (341 aa).

C38 is a binding site for Zn(2+). Residues T40 and H43 each act as charge relay system in the active site. 6 residues coordinate Zn(2+): H63, E64, C93, C96, C99, and C107. NAD(+) is bound by residues I175, D195, R200, 262–264 (LGI), and 286–287 (IY).

It belongs to the zinc-containing alcohol dehydrogenase family. Homotetramer. It depends on Zn(2+) as a cofactor.

The protein localises to the cytoplasm. The catalysed reaction is L-threonine + NAD(+) = (2S)-2-amino-3-oxobutanoate + NADH + H(+). It functions in the pathway amino-acid degradation; L-threonine degradation via oxydo-reductase pathway; glycine from L-threonine: step 1/2. Catalyzes the NAD(+)-dependent oxidation of L-threonine to 2-amino-3-ketobutyrate. The polypeptide is L-threonine 3-dehydrogenase (Yersinia pestis bv. Antiqua (strain Antiqua)).